Consider the following 1381-residue polypeptide: MLNTLYSGNRLRVDFSKTPQQIEVPNLLQLQQSSYNKFLMLEEKDRSQSGVETVFQSVFPIHDTQNRLTVEYIDSEVGKPKYTVRECMERGLTYAVSLRMKTRLILWDRDENTKEKLGVKDIKEQSIFVRDIPLMTERTSFIINGVERVVVNQLHRSPGVIFKEEESTTSGNKLIYTGQIIPDRGSWLYFEYDPKDILYMRINKRRKVPVTIMFRALGYSKQDILKLFYPIQHINIVDNKFLMSFNPNDYSSRLTYDLVDKNGKILLASGKRLSAKKAQNFIDEGLSEVEYPLEVLLDRYLAKPIVDPETGEILFDAMTRIDETKLKKLSEIGVKNFSIANDLAEGVDGSIINAFNADADSLKLLKQTEDIEDENHLSAIRIYKVMRPGEPVTKEAAKVFVNQLFFDPERYDLTKVGRMKMNHKLGLNIPEYITVLTHEDIIESVKYVIKVKNGQGHIDDRDHLGNRRIRSIGELLGNELHNGLIKMQKAIRDKLSTMSGPMNELMPHDLINSKMITSTIMEFFSGGQLSQFMDQTNPLSEVTHKRRLSALGEGGLVKERAGFEVRDVHPTHYGRICPIETPEGQNIGLINTLATYSKVNEHGFIEAPYKVMKEGKVTDEIVYLTATQEEGKKIAAASNKLDKDGQFIDKMVVTRVDGEILHRPVTECNYADLSSHMVVGVAASLIPFLEHDDANRALMGANMQRQAVPLIKHEAPIVGTGVEKLVARDSWECVKARRSGIVEKVDGKHIYVMGDDDGEIYIDYYPLQKNLRTNQNTAFGQKPIVNIGQRVEIGQVIADGPNMDQGELALGVNAMVAFMPWNGYNFEDAIVISERLIRKDAFTSVHIYEKEVEARELKHGVEEITRDIPNVRDDELSHLDESGIIKIGTNVTGGMILVGKVSPKGEVKPTPEERLLRAIFGEKAGHVINKSLYCPPSMEGVVVDVKIFTKKGYDKDARTLELEKEERDYLEREHYDRLLMIDKEEMLRVTKLLTKEPLINDIKIGNTSYKAGDIINGEDLVEVNRFAMNAIIKSFSEEIQSEYNKTKNYFQKEKRLFRDEHEEKLNILEKDDILPNGVVKHVKIYIATKRQLKVGDKMAGRHGNKGIVSTIVPEVDMPYMEDGRGVDVCLNPLGVPSRMNIGQILEMHLGMAGRELGHQITKEFESKQKDFIKNLRAKMIEIADVAQMMNAAKTLGDMSDELLLHHARDWSRGVKFASPIFEGVNAVEFEKLFALAKMDTDGKTVLYNGLTGEKIKERVNVGYMYILKLHHLVDEKIHARSTGPYSLVTQQPVGGKALFGGQRFGEMEVWALEAYGASAVLKEMLTIKSDDVDGRVRAYKAITKGELVPESGIPETLFVLTKELQSLALDVEIFDEVEDNE.

It belongs to the RNA polymerase beta chain family. As to quaternary structure, the RNAP catalytic core consists of 2 alpha, 1 beta, 1 beta' and 1 omega subunit. When a sigma factor is associated with the core the holoenzyme is formed, which can initiate transcription.

It catalyses the reaction RNA(n) + a ribonucleoside 5'-triphosphate = RNA(n+1) + diphosphate. In terms of biological role, DNA-dependent RNA polymerase catalyzes the transcription of DNA into RNA using the four ribonucleoside triphosphates as substrates. The sequence is that of DNA-directed RNA polymerase subunit beta from Sulfurimonas denitrificans (strain ATCC 33889 / DSM 1251) (Thiomicrospira denitrificans (strain ATCC 33889 / DSM 1251)).